Reading from the N-terminus, the 347-residue chain is Probable RNA methyltransferase azo0122 (347 aa).

Catalysis depends on E89, which acts as the Proton acceptor. The Radical SAM core domain occupies 92–318 (LLLRDGLCVS…AKLRQSAGQD (227 aa)). C99 and C323 are oxidised to a cystine. Residues C106, C110, and C113 each coordinate [4Fe-4S] cluster. S-adenosyl-L-methionine is bound by residues 151–152 (GE), S181, 204–206 (SLH), and N280. The S-methylcysteine intermediate role is filled by C323.

Belongs to the radical SAM superfamily. RlmN family. [4Fe-4S] cluster serves as cofactor.

It localises to the cytoplasm. In Azoarcus sp. (strain BH72), this protein is Probable RNA methyltransferase azo0122.